A 577-amino-acid chain; its full sequence is Arginine--tRNA ligase (577 aa).

A 'HIGH' region motif is present at residues 122–132 (PNVAKEMHVGH).

This sequence belongs to the class-I aminoacyl-tRNA synthetase family. As to quaternary structure, monomer.

It localises to the cytoplasm. It carries out the reaction tRNA(Arg) + L-arginine + ATP = L-arginyl-tRNA(Arg) + AMP + diphosphate. In Klebsiella pneumoniae (strain 342), this protein is Arginine--tRNA ligase.